Consider the following 360-residue polypeptide: MEPRDLSAHTVYRAGRGIEEVARELGLDPDDMVKLASNENMFGPSPDAVEAIRGSAERMHSYPKASHADLVDELADMWDVTPEQVWLSNGGDGALDCLARAMLDPGQDVLVPSPGFAYYAMSARYHHGEVNEYTLSKADDFAQTADTVLKDYDGERIVYLTSPHNPTGAEFTTDAVRTIAEETDEQTLVVVDEAYGEFTEKPSKRPLLSDRDDVALLRTFSKAYGLAGIRLGYAVVPEDWADAYARINTPFSASELACRAGLAALDDDEHVERSVDTAAWAREYLSAELDAPTWDSAGNFILAEVGDASAIADAAQERGVIIRDCSSFGLPECIRITCGTREDTERAVSVLNEVIEEVKA.

Lys222 is modified (N6-(pyridoxal phosphate)lysine).

Belongs to the class-II pyridoxal-phosphate-dependent aminotransferase family. Histidinol-phosphate aminotransferase subfamily. It depends on pyridoxal 5'-phosphate as a cofactor.

It catalyses the reaction L-histidinol phosphate + 2-oxoglutarate = 3-(imidazol-4-yl)-2-oxopropyl phosphate + L-glutamate. It functions in the pathway amino-acid biosynthesis; L-histidine biosynthesis; L-histidine from 5-phospho-alpha-D-ribose 1-diphosphate: step 7/9. In Haloarcula marismortui (strain ATCC 43049 / DSM 3752 / JCM 8966 / VKM B-1809) (Halobacterium marismortui), this protein is Histidinol-phosphate aminotransferase.